The sequence spans 471 residues: Putative F-box protein At5g36200 (471 aa).

Residues 1-46 (MAMSDLPNDLVEEIISRVPVKSIRAVSSTCKNWNTLSNDHSFTRKL) enclose the F-box domain.

In Arabidopsis thaliana (Mouse-ear cress), this protein is Putative F-box protein At5g36200.